The sequence spans 364 residues: Doublecortin domain-containing protein 2C (364 aa).

2 consecutive Doublecortin domains span residues lysine 16–isoleucine 98 and arginine 136–tryptophan 217. The disordered stretch occupies residues valine 233–glycine 255.

In terms of tissue distribution, expressed in testis and spermatozoa (at protein level).

It localises to the cell projection. The protein localises to the cilium. The protein resides in the flagellum. Its subcellular location is the cytoplasm. This is Doublecortin domain-containing protein 2C from Homo sapiens (Human).